The following is an 800-amino-acid chain: Internalin A (800 aa).

An N-terminal signal peptide occupies residues 1–35 (MRKKRYVWLKSILVAILVFGSGVWINTSNGTNAQA). Residues 36–76 (ATITQDTPINQIFTDTALAEKMKTVLGKTNVTDTVSQTDLD) form the LRRNT domain. LRR repeat units lie at residues 77–98 (QVTTLQADRLGIKSIDGVEYLN), 99–120 (NLTQINFSNNQLTDITPLKNLT), 121–142 (KLVDILMNNNQIADITPLANLT), 143–164 (NLTGLTLFNNQITDIDPLKNLT), 165–186 (NLNRLELSSNTISDISALSGLT), 187–207 (SLQQLSFGNQVTDLKPLANLT), 208–229 (TLERLDISSNKVSDISVLAKLT), 230–251 (NLESLIATNNQISDITPLGILT), 252–273 (NLDELSLNGNQLKDIGTLASLT), 274–295 (NLTDLDLANNQISNLAPLSGLT), 296–317 (KLTELKLGANQISNISPLAGLT), 318–339 (ALTNLELNENQLEDISPISNLK), 340–361 (NLTYLTLYFNNISDISPVSSLT), 362–383 (KLQRLFFYNNKVSDVSSLANLT), and 384–405 (NINWLSAGHNQISDLTPLANLT). The 90-residue stretch at 416–505 (AWTNAPVNYK…AIFNVKFHVD (90 aa)) folds into the LRRCT domain. The stretch at 518–587 (LLTEPAKPVK…TTSQTVDYQG (70 aa)) is one B-1 repeat. The 3 X approximate tandem repeats, type B stretch occupies residues 518–706 (LLTEPAKPVK…ITLYAQFTKN (189 aa)). One copy of the B-2 repeat lies at 588–657 (LLQEPTAPTK…STTQAVDYQG (70 aa)). A B-3 repeat occupies 658 to 706 (LLKEPKAPTKAGYTFKGWYDEKTDGKKWDFATDKMPANDITLYAQFTKN). The interval 705–757 (KNPVAPPTTGGNTPPTTNNGGNTTPPSANIPGSDTSNTSTGNSASTTSTMNAY) is disordered. The span at 711–753 (PTTGGNTPPTTNNGGNTTPPSANIPGSDTSNTSTGNSASTTST) shows a compositional bias: low complexity. An LPXTG sorting signal motif is present at residues 767-771 (LPTTG). A Pentaglycyl murein peptidoglycan amidated threonine modification is found at Thr-770. Positions 771–800 (GDSDNALYLLLGLLAVGTAMALTKKARASK) are cleaved as a propeptide — removed by sortase A.

It belongs to the internalin family. In terms of assembly, interacts with host (human) cadherin-1 (CDH1). The formation of the complex between inlA and cadherin-1 is calcium-dependent. Mutagenesis studies show it is possible to increase the affinity of InlA for CDH1 by rational engineering of InlA residues.

Its subcellular location is the secreted. The protein resides in the cell wall. Its activity is regulated as follows. Bacterial uptake is inhibited by EDTA and by anti-E-cadherin antibodies. In terms of biological role, mediates the entry of L.monocytogenes into host intestinal epithelial cells; transformation with inlA alone allows L.innocua (a non-invasive species) to be taken up by host cells. Binds to human receptor cadherin-1 (E-cadherin, CDH1); the chicken homolog of cadherin-1 but not cadherin-2 function as receptors. Mouse cadherin-1 is not a receptor, however mutating a single surface-exposed residue (Glu-172 to Pro in mouse) allows cadherin-1 to act as a receptor for InlA. The sequence is that of Internalin A from Listeria monocytogenes serovar 1/2a (strain ATCC BAA-679 / EGD-e).